Reading from the N-terminus, the 92-residue chain is Acylphosphatase (92 aa).

Residues Ala5–Tyr92 form the Acylphosphatase-like domain. Catalysis depends on residues Arg20 and Asn38.

Belongs to the acylphosphatase family.

It catalyses the reaction an acyl phosphate + H2O = a carboxylate + phosphate + H(+). The polypeptide is Acylphosphatase (acyP) (Pectobacterium atrosepticum (strain SCRI 1043 / ATCC BAA-672) (Erwinia carotovora subsp. atroseptica)).